Reading from the N-terminus, the 1960-residue chain is Myosin-9 (1960 aa).

An N-acetylalanine modification is found at A2. The segment at 2-838 (AQQAADKYLY…RLFTKVKPLL (837 aa)) is mediates interaction with LIMCH1. An N6-acetyllysine modification is found at K8. Phosphotyrosine is present on Y11. One can recognise a Myosin N-terminal SH3-like domain in the interval 27–77 (AAKKLVWVPSSKNGFEPASLKEEVGEEAIVELVENGKKVKVNKDDIQKMNP). In terms of domain architecture, Myosin motor spans 81–776 (SKVEDMAELT…VLAHLEEERD (696 aa)). K102 carries the post-translational modification N6-acetyllysine. 174–181 (GESGAGKT) is a binding site for ATP. 3 positions are modified to N6-acetyllysine: K299, K435, and K613. S628 is modified (phosphoserine). An actin-binding region spans residues 654–676 (LAKLMATLRNTNPNFVRCIIPNH). Residue Y754 is modified to Phosphotyrosine. Positions 779–808 (ITDVIIGFQACCRGYLARKAFAKRQQQLTA) constitute an IQ domain. A coiled-coil region spans residues 841 to 1926 (IRHEDELLAK…LKNKLRRGDL (1086 aa)). An N6-succinyllysine modification is found at K850. K860, K975, and K1024 each carry N6-acetyllysine. Positions 1035 to 1055 (RLRREEKQRQELEKTRRKLEG) are enriched in basic and acidic residues. The interval 1035–1057 (RLRREEKQRQELEKTRRKLEGDS) is disordered. S1114 carries the post-translational modification Phosphoserine. The disordered stretch occupies residues 1117–1167 (QEDLESERASRNKAEKQKRDLGEELEALKTELEDTLDSTAAQQELRSKREQ). Residues 1122–1148 (SERASRNKAEKQKRDLGEELEALKTEL) are compositionally biased toward basic and acidic residues. An N6-acetyllysine mark is found at K1234 and K1249. The interval 1327–1352 (LSTKLKQMEDEKNSFREQLEEEEEAK) is disordered. Basic and acidic residues predominate over residues 1332-1352 (KQMEDEKNSFREQLEEEEEAK). N6-acetyllysine is present on residues K1357, K1392, K1404, K1410, K1459, and K1638. K1669 is subject to N6-succinyllysine. S1714 carries the phosphoserine modification. A disordered region spans residues 1768 to 1788 (LERSHAQKNENARQQLERQNK). K1793, K1802, and K1845 each carry N6-acetyllysine. The tract at residues 1877 to 1908 (RQLEEAEEEAQRANASRRKLQRELEDATETAD) is disordered. R1923 is modified (omega-N-methylarginine). The residue at position 1939 (T1939) is a Phosphothreonine. The disordered stretch occupies residues 1939 to 1960 (TGDCSDEEVDGKADGADAKAAE). S1943 bears the Phosphoserine mark. Over residues 1948–1960 (DGKADGADAKAAE) the composition is skewed to basic and acidic residues.

Belongs to the TRAFAC class myosin-kinesin ATPase superfamily. Myosin family. In terms of assembly, myosin is a hexameric protein that consists of 2 heavy chain subunits (MHC), 2 alkali light chain subunits (MLC) and 2 regulatory light chain subunits (MLC-2). Interacts with RASIP1. Interacts with DDR1. Interacts with PDLIM2. Interacts with SVIL. Interacts with HTRA3. Interacts with Myo7a. Interacts with CFAP95. Interacts with LIMCH1; independently of the integration of MYH9 into the myosin complex. Interacts with RAB3A. Interacts with ZBED4. Interacts with S100A4; this interaction increases cell motility. Post-translationally, ISGylated. Ubiquitination.

The protein localises to the cytoplasm. Its subcellular location is the cytoskeleton. It is found in the cell cortex. It localises to the cytoplasmic vesicle. The protein resides in the secretory vesicle. The protein localises to the cortical granule. In terms of biological role, cellular myosin that appears to play a role in cytokinesis, cell shape, and specialized functions such as secretion and capping. Required for cortical actin clearance prior to oocyte exocytosis. Promotes cell motility in conjunction with S100A4. During cell spreading, plays an important role in cytoskeleton reorganization, focal contact formation (in the margins but not the central part of spreading cells), and lamellipodial retraction; this function is mechanically antagonized by MYH10. This Mus musculus (Mouse) protein is Myosin-9 (Myh9).